We begin with the raw amino-acid sequence, 218 residues long: Sodium channel regulatory subunit beta-1 (218 aa).

An N-terminal signal peptide occupies residues methionine 1 to tryptophan 18. At glycine 19–isoleucine 157 the chain is on the extracellular side. Intrachain disulfides connect cysteine 21/cysteine 43 and cysteine 40/cysteine 121. The 129-residue stretch at valine 22–alanine 150 folds into the Ig-like C2-type domain. 4 N-linked (GlcNAc...) asparagine glycosylation sites follow: asparagine 93, asparagine 110, asparagine 114, and asparagine 135. Residues valine 158–valine 179 traverse the membrane as a helical segment. Residues tyrosine 180–glutamate 218 are Cytoplasmic-facing.

The protein belongs to the sodium channel auxiliary subunit SCN1B (TC 8.A.17) family. A voltage-gated sodium (Nav) channel consists of an ion-conducting pore-forming alpha subunit functional on its own that is regulated by one or more beta subunits. Interacts with SCN1A; regulatory subunit of SCN1A/Nav1.1. Interacts with SCN3A; regulatory subunit of SCN3A/Nav1.3. Interacts with SCN4A; regulatory subunit of SCN4A/Nav1.4. Interacts with SCN5A; regulatory subunit of SCN5A/Nav1.5. Interacts with SCN8A; regulatory subunit of SCN8A/Nav1.6. Interacts with SCN9A; regulatory subunit of SCN9A/Nav1.7. Interacts with SCN10A; regulatory subunit of SCN10A/Nav1.8. Interacts with NFASC. Interacts with TMEM65.

Its subcellular location is the cell membrane. The protein localises to the perikaryon. The protein resides in the cell projection. It localises to the axon. In terms of biological role, regulatory subunit of multiple voltage-gated sodium (Nav) channels directly mediating the depolarization of excitable membranes. Navs, also called VGSCs (voltage-gated sodium channels) or VDSCs (voltage-dependent sodium channels), operate by switching between closed and open conformations depending on the voltage difference across the membrane. In the open conformation they allow Na(+) ions to selectively pass through the pore, along their electrochemical gradient. The influx of Na+ ions provokes membrane depolarization, initiating the propagation of electrical signals throughout cells and tissues. The accessory beta subunits participate in localization and functional modulation of the Nav channels. Modulates the activity of SCN1A/Nav1.1, SCN2A/Nav1.2, SCN3A/Nav1.3, SCN4A/Nav1.4, SCN5A/Nav1.5, SCN8A/Nav1.6, SCN9A/Nav1.7 and SCN10A/Nav1.8. The chain is Sodium channel regulatory subunit beta-1 from Canis lupus familiaris (Dog).